The following is an 873-amino-acid chain: Leucine--tRNA ligase (873 aa).

A 'HIGH' region motif is present at residues 43–53 (PYPSGSLHMGH). The short motif at 624–628 (TMSKS) is the 'KMSKS' region element. K627 contributes to the ATP binding site.

Belongs to the class-I aminoacyl-tRNA synthetase family.

It localises to the cytoplasm. It carries out the reaction tRNA(Leu) + L-leucine + ATP = L-leucyl-tRNA(Leu) + AMP + diphosphate. In Synechococcus sp. (strain JA-3-3Ab) (Cyanobacteria bacterium Yellowstone A-Prime), this protein is Leucine--tRNA ligase.